Reading from the N-terminus, the 289-residue chain is ATP synthase subunit a (289 aa).

Helical transmembrane passes span 43–63, 101–121, 160–180, 193–213, 232–252, and 259–279; these read AFHV…VLIF, SAVI…MNAV, LSVF…GGFI, IFVQ…TLIA, VFIL…GLGI, and AVFH…LTIV.

Belongs to the ATPase A chain family. F-type ATPases have 2 components, CF(1) - the catalytic core - and CF(0) - the membrane proton channel. CF(1) has five subunits: alpha(3), beta(3), gamma(1), delta(1), epsilon(1). CF(0) has three main subunits: a(1), b(2) and c(9-12). The alpha and beta chains form an alternating ring which encloses part of the gamma chain. CF(1) is attached to CF(0) by a central stalk formed by the gamma and epsilon chains, while a peripheral stalk is formed by the delta and b chains.

It localises to the cell inner membrane. Functionally, key component of the proton channel; it plays a direct role in the translocation of protons across the membrane. The chain is ATP synthase subunit a from Pseudomonas syringae pv. tomato (strain ATCC BAA-871 / DC3000).